A 474-amino-acid polypeptide reads, in one-letter code: Trigger factor (474 aa).

The PPIase FKBP-type domain occupies 171–258 (GDVAVIDFQG…LKELKTRDLP (88 aa)). The disordered stretch occupies residues 441 to 474 (TEVDAASATVETTATETAEEAPEAPKAKKGKKKA). Positions 444 to 456 (DAASATVETTATE) are enriched in low complexity.

It belongs to the FKBP-type PPIase family. Tig subfamily.

Its subcellular location is the cytoplasm. The enzyme catalyses [protein]-peptidylproline (omega=180) = [protein]-peptidylproline (omega=0). In terms of biological role, involved in protein export. Acts as a chaperone by maintaining the newly synthesized protein in an open conformation. Functions as a peptidyl-prolyl cis-trans isomerase. This is Trigger factor from Synechococcus sp. (strain ATCC 27144 / PCC 6301 / SAUG 1402/1) (Anacystis nidulans).